The primary structure comprises 267 residues: MDHNTIVAAALGLLEGLTEFIPVSSTGHVLLAGHFLGFDSPGRAFEVLIQLGAIMAILGVYAGRLWRIFSSAPQDPRARRFILAVLLAFLPAVVIGVLAHRIIKEVLFETPTLIAVMLIVGGVVLLFVDRMANRPRHFSAEDFPLPMALKIGFIQCLAMIPGVSRSGATIVGALLLGADKRSAAEFSFFLSMPTMLGAFVYDLYKNRDILDAAATGNIVIGFVCAFLAAVVVVRGLLNYVSTYGYGLFAWWRIAVGVAVLLALQAGW.

8 consecutive transmembrane segments (helical) span residues 5–25 (TIVA…PVSS), 45–65 (FEVL…AGRL), 82–102 (ILAV…AHRI), 108–128 (FETP…LLFV), 143–163 (FPLP…IPGV), 183–203 (AAEF…VYDL), 213–233 (AATG…VVVV), and 243–263 (YGYG…LLAL).

Belongs to the UppP family.

It localises to the cell inner membrane. It carries out the reaction di-trans,octa-cis-undecaprenyl diphosphate + H2O = di-trans,octa-cis-undecaprenyl phosphate + phosphate + H(+). Its function is as follows. Catalyzes the dephosphorylation of undecaprenyl diphosphate (UPP). Confers resistance to bacitracin. The chain is Undecaprenyl-diphosphatase from Paracoccus denitrificans (strain Pd 1222).